The chain runs to 431 residues: MKTPRLLQYLAYPQKITGPIIEAELRDVAIGELCEIRRGWHQKQVVARAQVVGLQRERTVLSLIGNAQGLSRDVVLYPTGRALSAWVGYSVLGAVLDPTGKIVERFTPEVAPISEERVIDVAPPSYASRVGVREPLITGVRAIDGLLTCGVGQRMGIFASAGCGKTMLMHMLIEQTEADVFVIGLIGERGREVTEFVDMLRASHKKEKCVLVFATSDFPSVDRCNAAQLATTVAEYFRDQGKRVVLFIDSMTRYARALRDVALASGERPARRGYPASVFDNLPRLLERPGATSEGSITAFYTVLLESEEEADPMADEIRSILDGHLYLSRKLAGQGHYPAIDVLKSVSRVFGQVTTPTHAEQASAVRKLMTRLEELQLFIDLGEYRPGENIDNDRAMQMRDSLKAWLCQPVAQYSSFDDTLSGMNAFADQN.

An ATP-binding site is contributed by 162–167 (GCGKTM).

It belongs to the ATPase alpha/beta chains family. T3SS ATPase subfamily. As to quaternary structure, the core secretion machinery of the T3SS is composed of approximately 20 different proteins, including cytoplasmic components, a base, an export apparatus and a needle. This subunit is part of the cytosolic complex. Forms homohexamers.

The protein localises to the cytoplasm. It catalyses the reaction ATP + H2O + cellular proteinSide 1 = ADP + phosphate + cellular proteinSide 2.. Functionally, ATPase component of the type III secretion system (T3SS), also called injectisome, which is used to inject bacterial effector proteins into eukaryotic host cells. Acts as a molecular motor to provide the energy that is required for the export of proteins. Required for type III secretion apparatus (T3SA) formation, proper protein secretion, host cell invasion and virulence. May play a critical role in T3SS substrate recognition, disassembly of the effector/chaperone complex and unfolding of the effector in an ATP-dependent manner prior to secretion. The sequence is that of SPI-1 type 3 secretion system ATPase from Salmonella typhi.